An 85-amino-acid polypeptide reads, in one-letter code: Large ribosomal subunit protein bL27 (85 aa).

The segment at 1 to 26 is disordered; sequence MAHKKGVGSSRNGRDSNPKMLGVKRF.

Belongs to the bacterial ribosomal protein bL27 family.

The polypeptide is Large ribosomal subunit protein bL27 (Roseiflexus sp. (strain RS-1)).